We begin with the raw amino-acid sequence, 131 residues long: Protein FAM107B (131 aa).

The residue at position 2 (alanine 2) is an N-acetylalanine. Disordered stretches follow at residues 39-78 and 100-131; these read MNQK…KKKS and KLQE…AQES. The residue at position 50 (lysine 50) is an N6-acetyllysine. A compositionally biased stretch (basic and acidic residues) spans 52 to 78; that stretch reads ELQKVMEKRKRDQVIKQKEEEAQKKKS. The stretch at 61-112 forms a coiled coil; that stretch reads KRDQVIKQKEEEAQKKKSDLEIELLKRQQKLEQLELEKQKLQEEQENAPEFV.

The protein belongs to the FAM107 family.

The polypeptide is Protein FAM107B (Homo sapiens (Human)).